The primary structure comprises 1649 residues: eIF-2-alpha kinase GCN2 (1649 aa).

3 disordered regions span residues 1-25, 138-158, and 227-256; these read MAGG…RQDH, NKPP…QEEQ, and HGGS…YSVC. Residues 25–137 form the RWD domain; it reads HELQALEAIY…YHVQSFLSEH (113 aa). Positions 146–205 form a coiled coil; that stretch reads HEEMLERRAQEEQQRLLEAKRKEEQEQREILHEIQRRKEEIKEEKKRKEMAKQERLEIAS. Ser-230 bears the Phosphoserine mark. Basic residues predominate over residues 237–249; the sequence is GKHRANSSGRSRR. 2 Protein kinase domains span residues 296-539 and 590-1001; these read VYNA…HSFI and FEEL…SELL. ATP contacts are provided by residues 596–604 and Lys-619; that span reads LGKGAFGAV. Disordered stretches follow at residues 660-750 and 766-788; these read ERPA…QSFL and ENSK…ESEP. Position 667 is a phosphothreonine (Thr-667). The span at 705–717 shows a compositional bias: polar residues; that stretch reads LSSSVEWSTSGER. The segment covering 731-740 has biased composition (acidic residues); it reads SDDEDDDEDE. The segment covering 778 to 787 has biased composition (basic and acidic residues); it reads NEKNGCHESE. Asp-848 serves as the catalytic Proton acceptor. The residue at position 871 (Thr-871) is a Phosphothreonine. Thr-899 and Thr-904 each carry phosphothreonine; by autocatalysis. A histidyl-tRNA synthetase-like region spans residues 1022–1493; it reads VDGKAYRTMM…DHVLQKLRTK (472 aa). At Lys-1259 the chain carries N6-acetyllysine.

This sequence belongs to the protein kinase superfamily. Ser/Thr protein kinase family. GCN2 subfamily. As to quaternary structure, homodimer; homodimerization is important for kinase activation by uncharged tRNAs. Interacts with GCN1; this interaction stimulates EIF2AK4/GCN2 kinase activity and is impaired by IMPACT upon a variety of stress conditions, such as amino acid depletion, UV-C irradiation, proteasome inhibitor treatment and glucose deprivation. Interacts with DNAJC3; this interaction inhibits EIF2AK4/GCN2 kinase activity during endoplasmic reticulum (ER), hypothermic and amino acid-starving stress conditions. Interacts with MAP3K20; activates EIF2AK4/GCN2 kinase activity in response to moderate ribotoxic stress. In terms of assembly, (Microbial infection) Interacts with hepatitis E virus (HEV) ORF1 protease; this interaction inhibits dimerization of EIF2AK4 and prevents EIF2AK4-mediated phosphorylation of EIF2A. Autophosphorylated; autophosphorylation on Thr-899 is increased upon amino acid starvation and in UV irradiation cells and inhibited in presence of IMPACT. Widely expressed. Expressed in lung, smooth muscle cells and macrophages.

The protein localises to the cytoplasm. It carries out the reaction L-seryl-[protein] + ATP = O-phospho-L-seryl-[protein] + ADP + H(+). It catalyses the reaction L-threonyl-[protein] + ATP = O-phospho-L-threonyl-[protein] + ADP + H(+). In terms of biological role, metabolic-stress sensing protein kinase that phosphorylates the alpha subunit of eukaryotic translation initiation factor 2 (EIF2S1/eIF-2-alpha) in response to low amino acid availability. Plays a role as an activator of the integrated stress response (ISR) required for adaptation to amino acid starvation. EIF2S1/eIF-2-alpha phosphorylation in response to stress converts EIF2S1/eIF-2-alpha into a global protein synthesis inhibitor, leading to a global attenuation of cap-dependent translation, and thus to a reduced overall utilization of amino acids, while concomitantly initiating the preferential translation of ISR-specific mRNAs, such as the transcriptional activator ATF4, and hence allowing ATF4-mediated reprogramming of amino acid biosynthetic gene expression to alleviate nutrient depletion. Binds uncharged tRNAs. Required for the translational induction of protein kinase PRKCH following amino acid starvation. Involved in cell cycle arrest by promoting cyclin D1 mRNA translation repression after the unfolded protein response pathway (UPR) activation or cell cycle inhibitor CDKN1A/p21 mRNA translation activation in response to amino acid deprivation. Plays a role in the consolidation of synaptic plasticity, learning as well as formation of long-term memory. Plays a role in neurite outgrowth inhibition. Plays a proapoptotic role in response to glucose deprivation. Promotes global cellular protein synthesis repression in response to UV irradiation independently of the stress-activated protein kinase/c-Jun N-terminal kinase (SAPK/JNK) and p38 MAPK signaling pathways. Plays a role in the antiviral response against alphavirus infection; impairs early viral mRNA translation of the incoming genomic virus RNA, thus preventing alphavirus replication. Functionally, (Microbial infection) Plays a role in modulating the adaptive immune response to yellow fever virus infection; promotes dendritic cells to initiate autophagy and antigene presentation to both CD4(+) and CD8(+) T-cells under amino acid starvation. The sequence is that of eIF-2-alpha kinase GCN2 from Homo sapiens (Human).